The primary structure comprises 370 residues: Platelet-derived growth factor D (370 aa).

Residues 1 to 23 form the signal peptide; the sequence is MQRLVLVSILLCANFSCYPDTFA. Residues 52–170 form the CUB domain; that stretch reads REENIQVTSN…PGFKIYYSFV (119 aa). C109 and C131 are joined by a disulfide. N276 is a glycosylation site (N-linked (GlcNAc...) asparagine). Cystine bridges form between C302–C360 and C306–C362.

The protein belongs to the PDGF/VEGF growth factor family. In terms of assembly, homodimer; disulfide-linked. Interacts with PDGFRB homodimers, and with heterodimers formed by PDGFRA and PDGFRB. Activated by proteolytic cleavage. Proteolytic removal of the N-terminal CUB domain releasing the core domain is necessary for unmasking the receptor-binding epitopes of the core domain. Cleavage after Arg-247 or Arg-249 by urokinase plasminogen activator gives rise to the active form. In terms of tissue distribution, expressed at high levels in developing heart, lung, kidney and some muscle derivatives. Moderately expressed in liver, brain and testis. In the kidney, localized to glomerular mesangial cells and vascular smooth muscle cells. Up-regulated in areas of renal fibrosis. In mice with unilateral ureteral obstruction, expressed in interstitial cells at day 4, with an increased to maximal expression at day 14.

The protein resides in the secreted. Functionally, growth factor that plays an essential role in the regulation of embryonic development, cell proliferation, cell migration, survival and chemotaxis. Potent mitogen for cells of mesenchymal origin. Plays an important role in wound healing. Has oncogenic potential and can induce tumor formation. Induces macrophage recruitment, increased interstitial pressure, and blood vessel maturation during angiogenesis. Can initiate events that lead to a mesangial proliferative glomerulonephritis, including influx of monocytes and macrophages and production of extracellular matrix. In Mus musculus (Mouse), this protein is Platelet-derived growth factor D (Pdgfd).